We begin with the raw amino-acid sequence, 402 residues long: Leucine aminopeptidase 1 (402 aa).

The N-terminal stretch at 1–18 (MKISNASLLALLLPAASA) is a signal peptide. The propeptide occupies 19-92 (RFVEQAEQNR…GTFNKRPYKK (74 aa)). 2 N-linked (GlcNAc...) asparagine glycosylation sites follow: Asn111 and Asn184. Residues His192, Asp211, Glu250, and Asp277 each coordinate Zn(2+). Asn304 is a glycosylation site (N-linked (GlcNAc...) asparagine). An intrachain disulfide couples Cys326 to Cys330. Position 359 (His359) interacts with Zn(2+).

This sequence belongs to the peptidase M28 family. M28E subfamily. In terms of assembly, monomer. Requires Zn(2+) as cofactor.

The protein resides in the secreted. In terms of biological role, extracellular aminopeptidase that allows assimilation of proteinaceous substrates. The chain is Leucine aminopeptidase 1 (lap1) from Neurospora crassa (strain ATCC 24698 / 74-OR23-1A / CBS 708.71 / DSM 1257 / FGSC 987).